A 291-amino-acid chain; its full sequence is Quinol oxidase subunit 2 (291 aa).

Residues 1–28 (MQLKKAFWKLASLLPLSLLLFLGGCDKK) form the signal peptide. Transmembrane regions (helical) follow at residues 49–69 (SFLL…VILI) and 91–111 (LEII…IPTV).

It belongs to the cytochrome c oxidase subunit 2 family.

It is found in the cell membrane. It carries out the reaction 2 a quinol + O2 = 2 a quinone + 2 H2O. Functionally, catalyzes quinol oxidation with the concomitant reduction of oxygen to water. Subunit II transfers the electrons from a quinol to the binuclear center of the catalytic subunit I. The protein is Quinol oxidase subunit 2 of Bacillus cereus (strain ATCC 14579 / DSM 31 / CCUG 7414 / JCM 2152 / NBRC 15305 / NCIMB 9373 / NCTC 2599 / NRRL B-3711).